Consider the following 103-residue polypeptide: Large ribosomal subunit protein eL21 (103 aa).

It belongs to the eukaryotic ribosomal protein eL21 family.

This chain is Large ribosomal subunit protein eL21, found in Sulfolobus acidocaldarius (strain ATCC 33909 / DSM 639 / JCM 8929 / NBRC 15157 / NCIMB 11770).